The primary structure comprises 172 residues: Crossover junction endodeoxyribonuclease RuvC (172 aa).

Residues aspartate 8, glutamate 67, and aspartate 139 contribute to the active site. Mg(2+) is bound by residues aspartate 8, glutamate 67, and aspartate 139.

It belongs to the RuvC family. Homodimer which binds Holliday junction (HJ) DNA. The HJ becomes 2-fold symmetrical on binding to RuvC with unstacked arms; it has a different conformation from HJ DNA in complex with RuvA. In the full resolvosome a probable DNA-RuvA(4)-RuvB(12)-RuvC(2) complex forms which resolves the HJ. The cofactor is Mg(2+).

The protein localises to the cytoplasm. It carries out the reaction Endonucleolytic cleavage at a junction such as a reciprocal single-stranded crossover between two homologous DNA duplexes (Holliday junction).. Functionally, the RuvA-RuvB-RuvC complex processes Holliday junction (HJ) DNA during genetic recombination and DNA repair. Endonuclease that resolves HJ intermediates. Cleaves cruciform DNA by making single-stranded nicks across the HJ at symmetrical positions within the homologous arms, yielding a 5'-phosphate and a 3'-hydroxyl group; requires a central core of homology in the junction. The consensus cleavage sequence is 5'-(A/T)TT(C/G)-3'. Cleavage occurs on the 3'-side of the TT dinucleotide at the point of strand exchange. HJ branch migration catalyzed by RuvA-RuvB allows RuvC to scan DNA until it finds its consensus sequence, where it cleaves and resolves the cruciform DNA. In Hahella chejuensis (strain KCTC 2396), this protein is Crossover junction endodeoxyribonuclease RuvC.